Reading from the N-terminus, the 194-residue chain is Thymidine kinase (194 aa).

ATP-binding positions include 15 to 22 and 88 to 91; these read GSMFSGKS and DEVQ. The Proton acceptor role is filled by E89. Positions 145, 148, 183, and 186 each coordinate Zn(2+).

The protein belongs to the thymidine kinase family. In terms of assembly, homotetramer.

The protein localises to the cytoplasm. The catalysed reaction is thymidine + ATP = dTMP + ADP + H(+). The protein is Thymidine kinase of Bacillus velezensis (strain DSM 23117 / BGSC 10A6 / LMG 26770 / FZB42) (Bacillus amyloliquefaciens subsp. plantarum).